Reading from the N-terminus, the 179-residue chain is MNPPLPHFRYHPEPLASGSIEASATTCQCCGKARGYVYTGSPYSRHELPPGSLCPWCIADGSAAARYEASFSDDYPLLDAGVAADIVTEVCERTPGYTSWQQERWLVCCEDACAFRGDAGREEIGQLGAEGLAQRFADFAWPAITWQRLVDAYTPGGNPAIYRFDCLHCGQAHYDLDFT.

The protein belongs to the UPF0167 family.

The protein is UPF0167 protein PA1536 of Pseudomonas aeruginosa (strain ATCC 15692 / DSM 22644 / CIP 104116 / JCM 14847 / LMG 12228 / 1C / PRS 101 / PAO1).